Consider the following 176-residue polypeptide: Flavodoxin 1 (176 aa).

The region spanning 4 to 165 (TGIFFGSDTG…RVEKWVKQVS (162 aa)) is the Flavodoxin-like domain.

This sequence belongs to the flavodoxin family. FMN is required as a cofactor.

Its function is as follows. Low-potential electron donor to a number of redox enzymes (Potential). Involved in the reactivation of inactive cob(II)alamin in methionine synthase. The protein is Flavodoxin 1 (fldA) of Salmonella typhimurium (strain LT2 / SGSC1412 / ATCC 700720).